We begin with the raw amino-acid sequence, 860 residues long: Alpha,alpha-trehalose-phosphate synthase [UDP-forming] 6 (860 aa).

S5 carries the post-translational modification Phosphoserine. The interval 53–557 is glycosyltransferase; the sequence is DRIIIVANEL…ARSFLQDLER (505 aa).

It in the N-terminal section; belongs to the glycosyltransferase 20 family. The protein in the C-terminal section; belongs to the trehalose phosphatase family. As to quaternary structure, binds to the phosphopeptide-binding site of GRF/14-3-3. Post-translationally, phosphorylated. Expressed in seedlings, leaves, stems, flowers, siliques and roots.

The enzyme catalyses D-glucose 6-phosphate + UDP-alpha-D-glucose = alpha,alpha-trehalose 6-phosphate + UDP + H(+). Its function is as follows. Regulates plant architecture, shape of epidermal pavement cells and branching of trichomes. The chain is Alpha,alpha-trehalose-phosphate synthase [UDP-forming] 6 from Arabidopsis thaliana (Mouse-ear cress).